A 154-amino-acid chain; its full sequence is 6,7-dimethyl-8-ribityllumazine synthase (154 aa).

Residues 22–23, 56–58, and 80–82 each bind 5-amino-6-(D-ribitylamino)uracil; these read FN, AFE, and TVI. Position 85 to 86 (85 to 86) interacts with (2S)-2-hydroxy-3-oxobutyl phosphate; the sequence is AT. Histidine 88 acts as the Proton donor in catalysis. Position 113 (phenylalanine 113) interacts with 5-amino-6-(D-ribitylamino)uracil. Residue arginine 127 coordinates (2S)-2-hydroxy-3-oxobutyl phosphate.

Belongs to the DMRL synthase family. In terms of assembly, forms an icosahedral capsid composed of 60 subunits, arranged as a dodecamer of pentamers. Can interact with riboflavin synthase, forming a lumazine synthase/riboflavin synthase complex, also designated as 'heavy riboflavin synthase complex', which consists of a trimer of riboflavin synthase enclosed within the icosahedral structure composed of 60 subunits of 6,7-dimethyl-8-ribityllumazine synthase.

It carries out the reaction (2S)-2-hydroxy-3-oxobutyl phosphate + 5-amino-6-(D-ribitylamino)uracil = 6,7-dimethyl-8-(1-D-ribityl)lumazine + phosphate + 2 H2O + H(+). Its pathway is cofactor biosynthesis; riboflavin biosynthesis; riboflavin from 2-hydroxy-3-oxobutyl phosphate and 5-amino-6-(D-ribitylamino)uracil: step 1/2. Its function is as follows. Catalyzes the formation of 6,7-dimethyl-8-ribityllumazine by condensation of 5-amino-6-(D-ribitylamino)uracil with 3,4-dihydroxy-2-butanone 4-phosphate. This is the penultimate step in the biosynthesis of riboflavin. Is able to use the non-natural R enantiomer of 3,4-dihydroxy-2-butanone 4-phosphate as a substrate, but with less efficiency than the natural S enantiomer. Cannot use unphosphorylated 3,4-dihydroxy-2-butanone, 3,4-dihydroxy-2-butanone 3-phosphate or diacetyl as substrates. This chain is 6,7-dimethyl-8-ribityllumazine synthase (ribH), found in Bacillus subtilis (strain 168).